We begin with the raw amino-acid sequence, 158 residues long: Small ribosomal subunit protein uS19 (158 aa).

The protein belongs to the universal ribosomal protein uS19 family.

Its function is as follows. Protein S19 forms a complex with S13 that binds strongly to the 16S ribosomal RNA. In Pyrobaculum aerophilum (strain ATCC 51768 / DSM 7523 / JCM 9630 / CIP 104966 / NBRC 100827 / IM2), this protein is Small ribosomal subunit protein uS19.